Reading from the N-terminus, the 58-residue chain is MNWKVLEHFPLLLYILAAKTLILCLAFAGVKVYQRKRLEAKQQKVEAEKRKQAEKKES.

Residues 9–29 form a helical membrane-spanning segment; it reads FPLLLYILAAKTLILCLAFAG. Residues 29–58 are a coiled coil; sequence GVKVYQRKRLEAKQQKVEAEKRKQAEKKES.

It localises to the membrane. The protein is Small integral membrane protein 11 (SMIM11) of Bos taurus (Bovine).